We begin with the raw amino-acid sequence, 456 residues long: Hydroxymethylglutaryl coenzyme A synthase (456 aa).

A34 contributes to the (3S)-3-hydroxy-3-methylglutaryl-CoA binding site. The Proton donor/acceptor role is filled by E85. 7 residues coordinate (3S)-3-hydroxy-3-methylglutaryl-CoA: C119, T161, S211, H258, K267, N335, and S369. C119 functions as the Acyl-thioester intermediate in the catalytic mechanism. The Proton donor/acceptor role is filled by H258.

It belongs to the thiolase-like superfamily. HMG-CoA synthase family.

It carries out the reaction acetoacetyl-CoA + acetyl-CoA + H2O = (3S)-3-hydroxy-3-methylglutaryl-CoA + CoA + H(+). Its function is as follows. HMG-CoA synthase; part of the gene cluster that mediates the biosynthesis of 1233A, a natural compound known as an inhibitor of HMG-CoA synthase in the mevalonate pathway and with antibacterial and antifungal activities. This enzyme condenses acetyl-CoA with acetoacetyl-CoA to form HMG-CoA, which is the substrate for HMG-CoA reductase. As part of the 1233A biosynthesis cluster, is involved in conferring self-resistance to 1233A. This is Hydroxymethylglutaryl coenzyme A synthase from Fusarium sp.